The chain runs to 314 residues: L-lactate dehydrogenase (314 aa).

NAD(+) contacts are provided by residues V16, D37, K42, Y68, and 82-83 (GV). Q85 and R91 together coordinate substrate. NAD(+) is bound by residues S104, 121–123 (ASN), and T146. 123-126 (NPVD) is a binding site for substrate. 151–154 (DTTR) contributes to the substrate binding site. Beta-D-fructose 1,6-bisphosphate is bound by residues R156 and H171. The active-site Proton acceptor is the H178. At Y223 the chain carries Phosphotyrosine. Residue T232 coordinates substrate.

This sequence belongs to the LDH/MDH superfamily. LDH family. Homotetramer.

The protein resides in the cytoplasm. It catalyses the reaction (S)-lactate + NAD(+) = pyruvate + NADH + H(+). It participates in fermentation; pyruvate fermentation to lactate; (S)-lactate from pyruvate: step 1/1. Its activity is regulated as follows. Allosterically activated by fructose 1,6-bisphosphate (FBP). Catalyzes the conversion of lactate to pyruvate. This chain is L-lactate dehydrogenase, found in Lactococcus lactis subsp. cremoris (strain MG1363).